A 182-amino-acid chain; its full sequence is Ribosome maturation factor RimM (182 aa).

In terms of domain architecture, PRC barrel spans 102 to 182 (EEGDYYWKDL…TIEVDWDPGF (81 aa)).

Belongs to the RimM family. In terms of assembly, binds ribosomal protein uS19.

The protein resides in the cytoplasm. Its function is as follows. An accessory protein needed during the final step in the assembly of 30S ribosomal subunit, possibly for assembly of the head region. Essential for efficient processing of 16S rRNA. May be needed both before and after RbfA during the maturation of 16S rRNA. It has affinity for free ribosomal 30S subunits but not for 70S ribosomes. The sequence is that of Ribosome maturation factor RimM from Salmonella enteritidis PT4 (strain P125109).